A 69-amino-acid polypeptide reads, in one-letter code: Cytochrome c oxidase subunit 8A, mitochondrial (69 aa).

Residues 1 to 25 (MSVLTSLLLRGLTGSARRLPVPRAK) constitute a mitochondrion transit peptide. The SIFI-degron motif lies at 2–19 (SVLTSLLLRGLTGSARRL). The Mitochondrial matrix portion of the chain corresponds to 26–36 (VHSMPPEEELG). A helical transmembrane segment spans residues 37–60 (TLEKAIALTSCFVSLFLPAGWILS). The Mitochondrial intermembrane portion of the chain corresponds to 61 to 69 (HLEDYKRPE).

Belongs to the cytochrome c oxidase VIII family. As to quaternary structure, component of the cytochrome c oxidase (complex IV, CIV), a multisubunit enzyme composed of 14 subunits. The complex is composed of a catalytic core of 3 subunits MT-CO1, MT-CO2 and MT-CO3, encoded in the mitochondrial DNA, and 11 supernumerary subunits COX4I, COX5A, COX5B, COX6A, COX6B, COX6C, COX7A, COX7B, COX7C, COX8 and NDUFA4, which are encoded in the nuclear genome. The complex exists as a monomer or a dimer and forms supercomplexes (SCs) in the inner mitochondrial membrane with NADH-ubiquinone oxidoreductase (complex I, CI) and ubiquinol-cytochrome c oxidoreductase (cytochrome b-c1 complex, complex III, CIII), resulting in different assemblies (supercomplex SCI(1)III(2)IV(1) and megacomplex MCI(2)III(2)IV(2)). Post-translationally, in response to mitochondrial stress, the precursor protein is ubiquitinated by the SIFI complex in the cytoplasm before mitochondrial import, leading to its degradation. Within the SIFI complex, UBR4 initiates ubiquitin chain that are further elongated or branched by KCMF1.

It localises to the mitochondrion inner membrane. The protein operates within energy metabolism; oxidative phosphorylation. Functionally, component of the cytochrome c oxidase, the last enzyme in the mitochondrial electron transport chain which drives oxidative phosphorylation. The respiratory chain contains 3 multisubunit complexes succinate dehydrogenase (complex II, CII), ubiquinol-cytochrome c oxidoreductase (cytochrome b-c1 complex, complex III, CIII) and cytochrome c oxidase (complex IV, CIV), that cooperate to transfer electrons derived from NADH and succinate to molecular oxygen, creating an electrochemical gradient over the inner membrane that drives transmembrane transport and the ATP synthase. Cytochrome c oxidase is the component of the respiratory chain that catalyzes the reduction of oxygen to water. Electrons originating from reduced cytochrome c in the intermembrane space (IMS) are transferred via the dinuclear copper A center (CU(A)) of subunit 2 and heme A of subunit 1 to the active site in subunit 1, a binuclear center (BNC) formed by heme A3 and copper B (CU(B)). The BNC reduces molecular oxygen to 2 water molecules using 4 electrons from cytochrome c in the IMS and 4 protons from the mitochondrial matrix. The polypeptide is Cytochrome c oxidase subunit 8A, mitochondrial (COX8A) (Papio anubis (Olive baboon)).